The sequence spans 196 residues: Peptidyl-tRNA hydrolase (196 aa).

Tyr18 contributes to the tRNA binding site. Residue His23 is the Proton acceptor of the active site. Residues Phe69, Asn71, and Asn117 each coordinate tRNA.

Belongs to the PTH family. As to quaternary structure, monomer.

The protein localises to the cytoplasm. The enzyme catalyses an N-acyl-L-alpha-aminoacyl-tRNA + H2O = an N-acyl-L-amino acid + a tRNA + H(+). In terms of biological role, hydrolyzes ribosome-free peptidyl-tRNAs (with 1 or more amino acids incorporated), which drop off the ribosome during protein synthesis, or as a result of ribosome stalling. Catalyzes the release of premature peptidyl moieties from peptidyl-tRNA molecules trapped in stalled 50S ribosomal subunits, and thus maintains levels of free tRNAs and 50S ribosomes. The polypeptide is Peptidyl-tRNA hydrolase (Aliivibrio salmonicida (strain LFI1238) (Vibrio salmonicida (strain LFI1238))).